A 283-amino-acid chain; its full sequence is NFU1 iron-sulfur cluster scaffold homolog, mitochondrial (283 aa).

The N-terminal 65 residues, Met1–Arg65, are a transit peptide targeting the mitochondrion. Positions Ile182–Val250 are nifU. [4Fe-4S] cluster is bound by residues Cys219 and Cys222.

Belongs to the NifU family.

It is found in the mitochondrion. Functionally, molecular scaffold for [Fe-S] cluster assembly of mitochondrial iron-sulfur proteins. This Drosophila sechellia (Fruit fly) protein is NFU1 iron-sulfur cluster scaffold homolog, mitochondrial.